Here is a 690-residue protein sequence, read N- to C-terminus: Elongation factor G (690 aa).

The tr-type G domain occupies 8–283 (SKCRNIGIMA…AVVDFLPAPN (276 aa)). Residues 17 to 24 (AHIDAGKT), 81 to 85 (DTPGH), and 135 to 138 (NKMD) each bind GTP.

The protein belongs to the TRAFAC class translation factor GTPase superfamily. Classic translation factor GTPase family. EF-G/EF-2 subfamily.

The protein localises to the cytoplasm. Functionally, catalyzes the GTP-dependent ribosomal translocation step during translation elongation. During this step, the ribosome changes from the pre-translocational (PRE) to the post-translocational (POST) state as the newly formed A-site-bound peptidyl-tRNA and P-site-bound deacylated tRNA move to the P and E sites, respectively. Catalyzes the coordinated movement of the two tRNA molecules, the mRNA and conformational changes in the ribosome. The polypeptide is Elongation factor G (Ehrlichia chaffeensis (strain ATCC CRL-10679 / Arkansas)).